We begin with the raw amino-acid sequence, 556 residues long: Glucose-6-phosphate isomerase (556 aa).

Glutamate 364 functions as the Proton donor in the catalytic mechanism. Catalysis depends on residues histidine 395 and lysine 521.

The protein belongs to the GPI family.

It localises to the cytoplasm. It catalyses the reaction alpha-D-glucose 6-phosphate = beta-D-fructose 6-phosphate. The protein operates within carbohydrate biosynthesis; gluconeogenesis. Its pathway is carbohydrate degradation; glycolysis; D-glyceraldehyde 3-phosphate and glycerone phosphate from D-glucose: step 2/4. Its function is as follows. Catalyzes the reversible isomerization of glucose-6-phosphate to fructose-6-phosphate. This is Glucose-6-phosphate isomerase from Corynebacterium kroppenstedtii (strain DSM 44385 / JCM 11950 / CIP 105744 / CCUG 35717).